The sequence spans 94 residues: Putative regulatory protein THA_332 (94 aa).

Belongs to the RemA family.

The chain is Putative regulatory protein THA_332 from Thermosipho africanus (strain TCF52B).